The following is a 64-amino-acid chain: Large ribosomal subunit protein uL29 (64 aa).

It belongs to the universal ribosomal protein uL29 family.

This chain is Large ribosomal subunit protein uL29 (rpl29), found in Methanothermobacter thermautotrophicus (strain ATCC 29096 / DSM 1053 / JCM 10044 / NBRC 100330 / Delta H) (Methanobacterium thermoautotrophicum).